The chain runs to 286 residues: 33 kDa chaperonin (286 aa).

Disulfide bonds link C233–C235 and C267–C270.

Belongs to the HSP33 family. In terms of processing, under oxidizing conditions two disulfide bonds are formed involving the reactive cysteines. Under reducing conditions zinc is bound to the reactive cysteines and the protein is inactive.

Its subcellular location is the cytoplasm. Its function is as follows. Redox regulated molecular chaperone. Protects both thermally unfolding and oxidatively damaged proteins from irreversible aggregation. Plays an important role in the bacterial defense system toward oxidative stress. The polypeptide is 33 kDa chaperonin (Histophilus somni (strain 2336) (Haemophilus somnus)).